The following is a 230-amino-acid chain: RING finger protein 141 (230 aa).

A lipid anchor (N-myristoyl glycine) is attached at Gly2. An RING-type zinc finger spans residues 155-192 (CCICMDGRADLILPCAHSFCQKCIDKWSDRHRNCPICR).

The protein localises to the membrane. May be involved in spermatogenesis. This is RING finger protein 141 (RNF141) from Bos taurus (Bovine).